The primary structure comprises 628 residues: 1-deoxy-D-xylulose-5-phosphate synthase (628 aa).

Thiamine diphosphate contacts are provided by residues His-80 and 121–123; that span reads GHS. Asp-152 lines the Mg(2+) pocket. Residues 153 to 154, Asn-181, Tyr-289, and Glu-370 contribute to the thiamine diphosphate site; that span reads GG. Asn-181 lines the Mg(2+) pocket.

It belongs to the transketolase family. DXPS subfamily. In terms of assembly, homodimer. Requires Mg(2+) as cofactor. Thiamine diphosphate is required as a cofactor.

The enzyme catalyses D-glyceraldehyde 3-phosphate + pyruvate + H(+) = 1-deoxy-D-xylulose 5-phosphate + CO2. Its pathway is metabolic intermediate biosynthesis; 1-deoxy-D-xylulose 5-phosphate biosynthesis; 1-deoxy-D-xylulose 5-phosphate from D-glyceraldehyde 3-phosphate and pyruvate: step 1/1. Its function is as follows. Catalyzes the acyloin condensation reaction between C atoms 2 and 3 of pyruvate and glyceraldehyde 3-phosphate to yield 1-deoxy-D-xylulose-5-phosphate (DXP). The protein is 1-deoxy-D-xylulose-5-phosphate synthase of Alkalilimnicola ehrlichii (strain ATCC BAA-1101 / DSM 17681 / MLHE-1).